A 216-amino-acid polypeptide reads, in one-letter code: Protein-L-isoaspartate O-methyltransferase 1 (216 aa).

Ser-60 is a catalytic residue.

Belongs to the methyltransferase superfamily. L-isoaspartyl/D-aspartyl protein methyltransferase family.

It is found in the cytoplasm. It carries out the reaction [protein]-L-isoaspartate + S-adenosyl-L-methionine = [protein]-L-isoaspartate alpha-methyl ester + S-adenosyl-L-homocysteine. In terms of biological role, catalyzes the methyl esterification of L-isoaspartyl residues in peptides and proteins that result from spontaneous decomposition of normal L-aspartyl and L-asparaginyl residues. It plays a role in the repair and/or degradation of damaged proteins. The sequence is that of Protein-L-isoaspartate O-methyltransferase 1 (pcm1) from Archaeoglobus fulgidus (strain ATCC 49558 / DSM 4304 / JCM 9628 / NBRC 100126 / VC-16).